The sequence spans 498 residues: Glycerol kinase (498 aa).

Thr12 contacts ADP. Thr12, Thr13, and Ser14 together coordinate ATP. Thr12 lines the sn-glycerol 3-phosphate pocket. Arg16 is a binding site for ADP. Residues Arg82, Glu83, Tyr134, and Asp243 each contribute to the sn-glycerol 3-phosphate site. Residues Arg82, Glu83, Tyr134, Asp243, and Gln244 each contribute to the glycerol site. ADP-binding residues include Thr265 and Gly308. ATP contacts are provided by Thr265, Gly308, Gln312, and Gly412. Residue Gly412 coordinates ADP.

Belongs to the FGGY kinase family.

The catalysed reaction is glycerol + ATP = sn-glycerol 3-phosphate + ADP + H(+). It functions in the pathway polyol metabolism; glycerol degradation via glycerol kinase pathway; sn-glycerol 3-phosphate from glycerol: step 1/1. With respect to regulation, inhibited by fructose 1,6-bisphosphate (FBP). Key enzyme in the regulation of glycerol uptake and metabolism. Catalyzes the phosphorylation of glycerol to yield sn-glycerol 3-phosphate. The sequence is that of Glycerol kinase from Rhizobium rhizogenes (strain K84 / ATCC BAA-868) (Agrobacterium radiobacter).